Consider the following 90-residue polypeptide: Small ribosomal subunit protein uS15c (90 aa).

In terms of assembly, component of the chloroplast small ribosomal subunit (SSU). Mature 70S chloroplast ribosomes of higher plants consist of a small (30S) and a large (50S) subunit. The 30S small subunit contains 1 molecule of ribosomal RNA (16S rRNA) and 24 different proteins. The 50S large subunit contains 3 rRNA molecules (23S, 5S and 4.5S rRNA) and 33 different proteins.

The protein resides in the plastid. Its subcellular location is the chloroplast. Functionally, component of the chloroplast ribosome (chloro-ribosome), a dedicated translation machinery responsible for the synthesis of chloroplast genome-encoded proteins, including proteins of the transcription and translation machinery and components of the photosynthetic apparatus. This is Small ribosomal subunit protein uS15c (rps15) from Spinacia oleracea (Spinach).